The chain runs to 114 residues: Ribonuclease P protein component (114 aa).

It belongs to the RnpA family. In terms of assembly, consists of a catalytic RNA component (M1 or rnpB) and a protein subunit.

It carries out the reaction Endonucleolytic cleavage of RNA, removing 5'-extranucleotides from tRNA precursor.. Functionally, RNaseP catalyzes the removal of the 5'-leader sequence from pre-tRNA to produce the mature 5'-terminus. It can also cleave other RNA substrates such as 4.5S RNA. The protein component plays an auxiliary but essential role in vivo by binding to the 5'-leader sequence and broadening the substrate specificity of the ribozyme. The protein is Ribonuclease P protein component of Staphylococcus haemolyticus (strain JCSC1435).